The primary structure comprises 1047 residues: Isoleucine--tRNA ligase (1047 aa).

The short motif at 52 to 62 (PTANGMPGAHH) is the 'HIGH' region element. A 'KMSKS' region motif is present at residues 600–604 (KMSKH). Lys603 is an ATP binding site.

The protein belongs to the class-I aminoacyl-tRNA synthetase family. IleS type 2 subfamily. As to quaternary structure, monomer. Zn(2+) is required as a cofactor.

It is found in the cytoplasm. It catalyses the reaction tRNA(Ile) + L-isoleucine + ATP = L-isoleucyl-tRNA(Ile) + AMP + diphosphate. In terms of biological role, catalyzes the attachment of isoleucine to tRNA(Ile). As IleRS can inadvertently accommodate and process structurally similar amino acids such as valine, to avoid such errors it has two additional distinct tRNA(Ile)-dependent editing activities. One activity is designated as 'pretransfer' editing and involves the hydrolysis of activated Val-AMP. The other activity is designated 'posttransfer' editing and involves deacylation of mischarged Val-tRNA(Ile). The sequence is that of Isoleucine--tRNA ligase from Streptomyces avermitilis (strain ATCC 31267 / DSM 46492 / JCM 5070 / NBRC 14893 / NCIMB 12804 / NRRL 8165 / MA-4680).